A 478-amino-acid polypeptide reads, in one-letter code: Uronate isomerase (478 aa).

The protein belongs to the metallo-dependent hydrolases superfamily. Uronate isomerase family.

It carries out the reaction D-glucuronate = D-fructuronate. It catalyses the reaction aldehydo-D-galacturonate = keto-D-tagaturonate. It participates in carbohydrate metabolism; pentose and glucuronate interconversion. The chain is Uronate isomerase from Bacillus pumilus (strain SAFR-032).